Consider the following 365-residue polypeptide: Outer membrane porin protein LC (365 aa).

Residues 1–23 (MKKLTVAISAVAASVLMAMSAQA) form the signal peptide.

It belongs to the Gram-negative porin family. As to quaternary structure, homotrimer.

The protein resides in the host cell outer membrane. Its function is as follows. Forms pores that allow passive diffusion of small molecules across the host cell outer membrane. The sequence is that of Outer membrane porin protein LC (LC) from Enterobacteria phage PA-2 (Bacteriophage PA-2).